Consider the following 166-residue polypeptide: Small ribosomal subunit protein uS5 (166 aa).

An S5 DRBM domain is found at Y12–V75.

Belongs to the universal ribosomal protein uS5 family. Part of the 30S ribosomal subunit. Contacts proteins S4 and S8.

Its function is as follows. With S4 and S12 plays an important role in translational accuracy. Functionally, located at the back of the 30S subunit body where it stabilizes the conformation of the head with respect to the body. This is Small ribosomal subunit protein uS5 from Pseudomonas putida (strain ATCC 700007 / DSM 6899 / JCM 31910 / BCRC 17059 / LMG 24140 / F1).